The primary structure comprises 314 residues: Mitochondrial 2-oxoglutarate/malate carrier protein (314 aa).

A2 bears the N-acetylalanine mark. S6 is subject to Phosphoserine. 3 Solcar repeats span residues 23–108 (VKFL…LFER), 117–208 (PGFL…SKQF), and 217–306 (DNIL…MNKA). The helical transmembrane segment at 24–42 (KFLFGGLAGMGATVFVQPL) threads the bilayer. K57 is subject to N6-succinyllysine. N6-acetyllysine is present on K73. The chain crosses the membrane as a helical span at residues 83–101 (GLSAGLLRQATYTTTRLGI). At Y102 the chain carries Phosphotyrosine. 3 helical membrane passes run 119–140 (FLLKALIGMTAGATGAFVGTPA), 183–202 (GCIPTMARAVVVNAAQLASY), and 222–240 (HFCASMISGLVTTAASMPV). Residue K256 is modified to N6-acetyllysine. The chain crosses the membrane as a helical span at residues 281–300 (GFTPYYARLGPHTVLTFIFL).

This sequence belongs to the mitochondrial carrier (TC 2.A.29) family. Interacts with SMIM26.

The protein localises to the mitochondrion inner membrane. It carries out the reaction (S)-malate(in) + 2-oxoglutarate(out) = (S)-malate(out) + 2-oxoglutarate(in). It catalyses the reaction malonate(in) + 2-oxoglutarate(out) = malonate(out) + 2-oxoglutarate(in). The catalysed reaction is succinate(in) + 2-oxoglutarate(out) = succinate(out) + 2-oxoglutarate(in). The enzyme catalyses maleate(in) + 2-oxoglutarate(out) = maleate(out) + 2-oxoglutarate(in). It carries out the reaction oxaloacetate(in) + 2-oxoglutarate(out) = oxaloacetate(out) + 2-oxoglutarate(in). In terms of biological role, catalyzes the transport of 2-oxoglutarate (alpha-oxoglutarate) across the inner mitochondrial membrane in an electroneutral exchange for malate. Can also exchange 2-oxoglutarate for other dicarboxylic acids such as malonate, succinate, maleate and oxaloacetate, although with lower affinity. Contributes to several metabolic processes, including the malate-aspartate shuttle, the oxoglutarate/isocitrate shuttle, in gluconeogenesis from lactate, and in nitrogen metabolism. Maintains mitochondrial fusion and fission events, and the organization and morphology of cristae. Involved in the regulation of apoptosis. Helps protect from cytotoxic-induced apoptosis by modulating glutathione levels in mitochondria. In Mus musculus (Mouse), this protein is Mitochondrial 2-oxoglutarate/malate carrier protein (Slc25a11).